The primary structure comprises 518 residues: GMP synthase [glutamine-hydrolyzing] (518 aa).

Positions 6–200 (RLLIIDFGSQ…FVRLAGFKGD (195 aa)) constitute a Glutamine amidotransferase type-1 domain. Residue C84 is the Nucleophile of the active site. Active-site residues include H175 and E177. One can recognise a GMPS ATP-PPase domain in the interval 201 to 393 (WTMGAYREEA…LGLPESFIGR (193 aa)). Residue 228 to 234 (SGGVDSS) coordinates ATP.

As to quaternary structure, homodimer.

The enzyme catalyses XMP + L-glutamine + ATP + H2O = GMP + L-glutamate + AMP + diphosphate + 2 H(+). Its pathway is purine metabolism; GMP biosynthesis; GMP from XMP (L-Gln route): step 1/1. Functionally, catalyzes the synthesis of GMP from XMP. The protein is GMP synthase [glutamine-hydrolyzing] of Cereibacter sphaeroides (strain ATCC 17029 / ATH 2.4.9) (Rhodobacter sphaeroides).